The chain runs to 174 residues: NADH-quinone oxidoreductase subunit B (174 aa).

4 residues coordinate [4Fe-4S] cluster: cysteine 51, cysteine 52, cysteine 116, and cysteine 146.

The protein belongs to the complex I 20 kDa subunit family. In terms of assembly, NDH-1 is composed of 14 different subunits. Subunits NuoB, C, D, E, F, and G constitute the peripheral sector of the complex. The cofactor is [4Fe-4S] cluster.

The protein localises to the cell inner membrane. The enzyme catalyses a quinone + NADH + 5 H(+)(in) = a quinol + NAD(+) + 4 H(+)(out). Its function is as follows. NDH-1 shuttles electrons from NADH, via FMN and iron-sulfur (Fe-S) centers, to quinones in the respiratory chain. The immediate electron acceptor for the enzyme in this species is believed to be ubiquinone. Couples the redox reaction to proton translocation (for every two electrons transferred, four hydrogen ions are translocated across the cytoplasmic membrane), and thus conserves the redox energy in a proton gradient. This is NADH-quinone oxidoreductase subunit B from Anaplasma phagocytophilum (strain HZ).